A 453-amino-acid polypeptide reads, in one-letter code: DNA repair protein RadA (453 aa).

Residues 10 to 27 (CQECGYQSPKYLGRCPNC) form a C4-type zinc finger. Position 95-102 (95-102 (GDPGIGKS)) interacts with ATP. The short motif at 251–255 (KNRFG) is the RadA KNRFG motif element. The lon-protease-like stretch occupies residues 350–453 (DAYLKSAGGV…VGQVLKAVFS (104 aa)).

Belongs to the RecA family. RadA subfamily.

In terms of biological role, DNA-dependent ATPase involved in processing of recombination intermediates, plays a role in repairing DNA breaks. Stimulates the branch migration of RecA-mediated strand transfer reactions, allowing the 3' invading strand to extend heteroduplex DNA faster. Binds ssDNA in the presence of ADP but not other nucleotides, has ATPase activity that is stimulated by ssDNA and various branched DNA structures, but inhibited by SSB. Does not have RecA's homology-searching function. This is DNA repair protein RadA from Streptococcus pyogenes serotype M3 (strain ATCC BAA-595 / MGAS315).